Consider the following 584-residue polypeptide: 2-isopropylmalate synthase (584 aa).

In terms of domain architecture, Pyruvate carboxyltransferase spans 40–314; it reads PRWCAVDLRD…DPQIDFSDIE (275 aa). The Mg(2+) site is built by aspartate 49, histidine 253, histidine 255, and asparagine 289. The tract at residues 456 to 584 is regulatory domain; sequence SRDGSGSTWG…VRDAQEAAQD (129 aa).

Belongs to the alpha-IPM synthase/homocitrate synthase family. LeuA type 2 subfamily. Homodimer. It depends on Mg(2+) as a cofactor.

Its subcellular location is the cytoplasm. It carries out the reaction 3-methyl-2-oxobutanoate + acetyl-CoA + H2O = (2S)-2-isopropylmalate + CoA + H(+). The protein operates within amino-acid biosynthesis; L-leucine biosynthesis; L-leucine from 3-methyl-2-oxobutanoate: step 1/4. Catalyzes the condensation of the acetyl group of acetyl-CoA with 3-methyl-2-oxobutanoate (2-ketoisovalerate) to form 3-carboxy-3-hydroxy-4-methylpentanoate (2-isopropylmalate). In Kocuria rhizophila (strain ATCC 9341 / DSM 348 / NBRC 103217 / DC2201), this protein is 2-isopropylmalate synthase.